A 417-amino-acid chain; its full sequence is Bifunctional thiamine biosynthesis protein ThiDN (417 aa).

The interval 1–235 (MVILAIGGYD…KSKFGYNSNP (235 aa)) is hydroxymethylpyrimidine/phosphomethylpyrimidine kinase. Residue Q41 coordinates 4-amino-5-hydroxymethyl-2-methylpyrimidine. Residues 236-417 (TYINKEKVIK…VIQKIYNTLM (182 aa)) are thiamine-phosphate synthase.

The protein in the N-terminal section; belongs to the ThiD family. This sequence in the C-terminal section; belongs to the ThiN family.

It carries out the reaction 4-amino-5-hydroxymethyl-2-methylpyrimidine + ATP = 4-amino-2-methyl-5-(phosphooxymethyl)pyrimidine + ADP + H(+). It catalyses the reaction 4-amino-2-methyl-5-(phosphooxymethyl)pyrimidine + ATP = 4-amino-2-methyl-5-(diphosphooxymethyl)pyrimidine + ADP. The catalysed reaction is 2-[(2R,5Z)-2-carboxy-4-methylthiazol-5(2H)-ylidene]ethyl phosphate + 4-amino-2-methyl-5-(diphosphooxymethyl)pyrimidine + 2 H(+) = thiamine phosphate + CO2 + diphosphate. The enzyme catalyses 2-(2-carboxy-4-methylthiazol-5-yl)ethyl phosphate + 4-amino-2-methyl-5-(diphosphooxymethyl)pyrimidine + 2 H(+) = thiamine phosphate + CO2 + diphosphate. It carries out the reaction 4-methyl-5-(2-phosphooxyethyl)-thiazole + 4-amino-2-methyl-5-(diphosphooxymethyl)pyrimidine + H(+) = thiamine phosphate + diphosphate. It participates in cofactor biosynthesis; thiamine diphosphate biosynthesis; 4-amino-2-methyl-5-diphosphomethylpyrimidine from 5-amino-1-(5-phospho-D-ribosyl)imidazole. Its pathway is cofactor biosynthesis; thiamine diphosphate biosynthesis; thiamine phosphate from 4-amino-2-methyl-5-diphosphomethylpyrimidine and 4-methyl-5-(2-phosphoethyl)-thiazole: step 1/1. In terms of biological role, catalyzes the phosphorylation of hydroxymethylpyrimidine phosphate (HMP-P) to HMP-PP, and of HMP to HMP-P. Condenses 4-methyl-5-(beta-hydroxyethyl)thiazole monophosphate (THZ-P) and 4-amino-5-hydroxymethyl pyrimidine pyrophosphate (HMP-PP) to form thiamine monophosphate (TMP). The sequence is that of Bifunctional thiamine biosynthesis protein ThiDN (thiDN) from Methanocaldococcus jannaschii (strain ATCC 43067 / DSM 2661 / JAL-1 / JCM 10045 / NBRC 100440) (Methanococcus jannaschii).